Here is a 319-residue protein sequence, read N- to C-terminus: ATP-dependent 6-phosphofructokinase (319 aa).

G11 is an ATP binding site. Position 21 to 25 (21 to 25 (RAVVR)) interacts with ADP. Residues 72–73 (RC) and 102–105 (GDGS) each bind ATP. D103 is a binding site for Mg(2+). 125 to 127 (TID) serves as a coordination point for substrate. D127 acts as the Proton acceptor in catalysis. R154 is an ADP binding site. Substrate-binding positions include R162 and 169 to 171 (MGR). ADP is bound by residues 185–187 (GAE), R211, and 213–215 (KKH). Substrate-binding positions include E222, R243, and 249–252 (HVQR).

The protein belongs to the phosphofructokinase type A (PFKA) family. ATP-dependent PFK group I subfamily. Prokaryotic clade 'B1' sub-subfamily. In terms of assembly, homotetramer. It depends on Mg(2+) as a cofactor.

The protein localises to the cytoplasm. The catalysed reaction is beta-D-fructose 6-phosphate + ATP = beta-D-fructose 1,6-bisphosphate + ADP + H(+). The protein operates within carbohydrate degradation; glycolysis; D-glyceraldehyde 3-phosphate and glycerone phosphate from D-glucose: step 3/4. Allosterically activated by ADP and other diphosphonucleosides, and allosterically inhibited by phosphoenolpyruvate. Its function is as follows. Catalyzes the phosphorylation of D-fructose 6-phosphate to fructose 1,6-bisphosphate by ATP, the first committing step of glycolysis. This is ATP-dependent 6-phosphofructokinase from Bacillus anthracis (strain A0248).